Consider the following 1364-residue polypeptide: Trifunctional purine biosynthetic protein adenosine-3 (1364 aa).

One can recognise an ATP-grasp domain in the interval 114–321; sequence KDFMLRHGIP…LFEVMQACCS (208 aa). An ATP-binding site is contributed by 140-202; the sequence is IRSAPYQALV…EELLEGEEIS (63 aa). Mn(2+)-binding residues include Glu291 and Asn293. An AIRS region spans residues 435 to 1154; the sequence is AIATAPGLSY…ARTQRMLSQP (720 aa). Residues 1155–1364 form a GART region; sequence RKRVAVLISG…EAPKDIKDSQ (210 aa). Residue 1166–1168 coordinates N(1)-(5-phospho-beta-D-ribosyl)glycinamide; that stretch reads GSN. Residues Arg1221, 1246–1249, and Asn1263 each bind (6R)-10-formyltetrahydrofolate; that span reads MRIL. His1265 functions as the Proton donor in the catalytic mechanism. 1297-1301 contacts (6R)-10-formyltetrahydrofolate; the sequence is DEGVD. A N(1)-(5-phospho-beta-D-ribosyl)glycinamide-binding site is contributed by 1327–1330; the sequence is HYAE.

This sequence in the N-terminal section; belongs to the GARS family. In the central section; belongs to the AIR synthase family. The protein in the C-terminal section; belongs to the GART family.

The catalysed reaction is 5-phospho-beta-D-ribosylamine + glycine + ATP = N(1)-(5-phospho-beta-D-ribosyl)glycinamide + ADP + phosphate + H(+). The enzyme catalyses 2-formamido-N(1)-(5-O-phospho-beta-D-ribosyl)acetamidine + ATP = 5-amino-1-(5-phospho-beta-D-ribosyl)imidazole + ADP + phosphate + H(+). It catalyses the reaction N(1)-(5-phospho-beta-D-ribosyl)glycinamide + (6R)-10-formyltetrahydrofolate = N(2)-formyl-N(1)-(5-phospho-beta-D-ribosyl)glycinamide + (6S)-5,6,7,8-tetrahydrofolate + H(+). It functions in the pathway purine metabolism; IMP biosynthesis via de novo pathway; 5-amino-1-(5-phospho-D-ribosyl)imidazole from N(2)-formyl-N(1)-(5-phospho-D-ribosyl)glycinamide: step 2/2. It participates in purine metabolism; IMP biosynthesis via de novo pathway; N(1)-(5-phospho-D-ribosyl)glycinamide from 5-phospho-alpha-D-ribose 1-diphosphate: step 2/2. Its pathway is purine metabolism; IMP biosynthesis via de novo pathway; N(2)-formyl-N(1)-(5-phospho-D-ribosyl)glycinamide from N(1)-(5-phospho-D-ribosyl)glycinamide (10-formyl THF route): step 1/1. In terms of biological role, trifunctional enzyme required for de novo purine biosynthesis. The polypeptide is Trifunctional purine biosynthetic protein adenosine-3 (ade3) (Drosophila pseudoobscura pseudoobscura (Fruit fly)).